Reading from the N-terminus, the 871-residue chain is Alanine--tRNA ligase (871 aa).

Residues H561, H565, C665, and H669 each contribute to the Zn(2+) site.

This sequence belongs to the class-II aminoacyl-tRNA synthetase family. Zn(2+) is required as a cofactor.

The protein resides in the cytoplasm. It catalyses the reaction tRNA(Ala) + L-alanine + ATP = L-alanyl-tRNA(Ala) + AMP + diphosphate. Functionally, catalyzes the attachment of alanine to tRNA(Ala) in a two-step reaction: alanine is first activated by ATP to form Ala-AMP and then transferred to the acceptor end of tRNA(Ala). Also edits incorrectly charged Ser-tRNA(Ala) and Gly-tRNA(Ala) via its editing domain. This is Alanine--tRNA ligase from Dehalococcoides mccartyi (strain ATCC BAA-2100 / JCM 16839 / KCTC 5957 / BAV1).